Here is a 228-residue protein sequence, read N- to C-terminus: L-ribulose-5-phosphate 4-epimerase UlaF (228 aa).

Residues 26 to 27, 43 to 44, and 72 to 73 each bind substrate; these read GN, SG, and SS. Residues D74, H93, and H95 each contribute to the Zn(2+) site. Residue D118 is the Proton donor/acceptor of the active site. H167 contributes to the Zn(2+) binding site. The active-site Proton donor/acceptor is the Y225.

This sequence belongs to the aldolase class II family. AraD/FucA subfamily. The cofactor is Zn(2+).

It catalyses the reaction L-ribulose 5-phosphate = D-xylulose 5-phosphate. It participates in cofactor degradation; L-ascorbate degradation; D-xylulose 5-phosphate from L-ascorbate: step 4/4. Functionally, catalyzes the isomerization of L-ribulose 5-phosphate to D-xylulose 5-phosphate. Is involved in the anaerobic L-ascorbate utilization. This chain is L-ribulose-5-phosphate 4-epimerase UlaF, found in Escherichia coli O139:H28 (strain E24377A / ETEC).